The following is a 488-amino-acid chain: MEPAQQPPPQPAPQGPAPPSVSPAGTPAAPPAPPAGHQVVHVRGDSETDLEALFNAVMNPKTANVPQTVPMRLRKLPDSFFKPPEPKSHSRQASTDAGTAGALTPQHVRAHSSPASLQLGAVSPGTLTASGVVSGPAAAPAAQHLRQSSFEIPDDVPLPAGWEMAKTSSGQRYFLNHNDQTTTWQDPRKAMLSQLNVPAPASPAVPQTLMNSASGPLPDGWEQAMTQDGEVYYINHKNKTTSWLDPRLDPRFAMNQRITQSAPVKQPPPLAPQSPQGGVLGGGSSNQQQQIQLQQLQMEKERLRLKQQELFRQAIRNINPSTANAPKCQELALRSQLPTLEQDGGTPNAVSSPGMSQELRTMTTNSSDPFLNSGTYHSRDESTDSGLSMSSYSIPRTPDDFLNSVDEMDTGDTISQSTLPSQQSRFPDYLEALPGTNVDLGTLEGDAMNIEGEELMPSLQEALSSEILDVESVLAATKLDKESFLTWL.

Positions 1–21 (MEPAQQPPPQPAPQGPAPPSV) are enriched in pro residues. The tract at residues 1-47 (MEPAQQPPPQPAPQGPAPPSVSPAGTPAAPPAPPAGHQVVHVRGDSE) is disordered. Residue S46 is modified to Phosphoserine. A Phosphothreonine modification is found at T48. The stretch at 71–85 (MRLRKLPDSFFKPPE) forms a coiled coil. An N6-lactoyllysine modification is found at K75. The tract at residues 76-99 (LPDSFFKPPEPKSHSRQASTDAGT) is disordered. 2 positions are modified to phosphoserine: S90 and S94. Position 95 is a phosphothreonine (T95). A Phosphothreonine; by MAPK8 and MAPK9 modification is found at T104. Residues S112, S113, S116, and S123 each carry the phosphoserine modification. At S149 the chain carries Phosphoserine; by LATS1 and LATS2. 2 consecutive WW domains span residues 156-189 (VPLPAGWEMAKTSSGQRYFLNHNDQTTTWQDPRK) and 215-248 (GPLPDGWEQAMTQDGEVYYINHKNKTTSWLDPRL). Disordered stretches follow at residues 261–293 (SAPVKQPPPLAPQSPQGGVLGGGSSNQQQQIQL) and 339–393 (TLEQ…SSYS). S274 carries the phosphoserine modification. Positions 276 to 488 (QGGVLGGGSS…LDKESFLTWL (213 aa)) are transactivation domain. Residues 283-344 (GSSNQQQQIQ…SQLPTLEQDG (62 aa)) are a coiled coil. Residues 348 to 376 (NAVSSPGMSQELRTMTTNSSDPFLNSGTY) show a composition bias toward polar residues. S352 is modified (phosphoserine; by MAPK8 and MAPK9). 4 positions are modified to phosphoserine: S356, S366, S367, and S373. S382 bears the Phosphoserine; by LATS1 and LATS2 mark. Residues 384 to 393 (DSGLSMSSYS) show a composition bias toward polar residues. S385 and S388 each carry phosphoserine; by CK1. Residue Y392 is modified to Phosphotyrosine; by ABL1. The residue at position 397 (T397) is a Phosphothreonine; by MAPK8 and MAPK9.

Belongs to the YAP1 family. In terms of assembly, part of a complex when phosphorylated that contains DSG3, PKP1, YAP1 and YWHAG; the complex is required for localization of DSG3 and YAP1 to the cell membrane in keratinocytes. Binds to the SH3 domain of the YES kinase. Binds to WBP1 and WBP2. Binds, in vitro, through the WW1 domain, to neural isoforms of ENAH that contain the PPSY motif. The phosphorylated form interacts with YWHAB. Interacts (via WW domains) with LATS1 (via PPxY motif 2). Interacts with LATS2. Interacts (via WW domain 1) with isoform JM-A of ERBB4 (via PPxY motif 2). Interacts with TEAD1, TEAD2 and TEAD3. Interacts with TP73 and HCK. Interacts with RUNX1. Interacts with TEAD4. Interacts (via WW domains) with PTPN14 (via PPxY motif 2); this interaction leads to the cytoplasmic sequestration of YAP1 and inhibits its transcriptional coactivator activity. Interacts (when phosphorylated at Ser-112) with SMAD2, SMAD3 and WWTR1. Interacts with PRRG2 (via cytoplasmic domain). Interacts (via WW domains) with PRRG4 (via cytoplasmic domain). Interacts (phosphorylated) with CLDN18; the interaction sequesters YAP1 away from the nucleus and thereby restricts transcription of YAP1 target genes. Interacts with SMAD1. Interacts with AMOT; the interaction facilitates translocation of YAP1 to the cytoplasm and tight junctions. Interacts with AMOTL2, the interaction is required for ubiquitination of AMOTL2 and localization of YAP1 to tight junctions. Post-translationally, phosphorylated by LATS1 and LATS2; leading to cytoplasmic translocation and inactivation. Phosphorylated by ABL1; leading to YAP1 stabilization, enhanced interaction with TP73 and recruitment onto proapoptotic genes; in response to DNA damage. Phosphorylation at Ser-385 and Ser-388 by CK1 is triggered by previous phosphorylation at Ser-382 by LATS proteins and leads to YAP1 ubiquitination by SCF(beta-TRCP) E3 ubiquitin ligase and subsequent degradation. Phosphorylated at Thr-104, Ser-123, Ser-352 and Thr-397 by MAPK8/JNK1 and MAPK9/JNK2, which is required for the regulation of apoptosis by YAP1. In terms of processing, lactylation by AARS1 promotes nuclear localization and stabilization of YAP1, leading to increased Hippo signaling pathway. Delactylated by SIRT1. Ubiquitinated by SCF(beta-TRCP) E3 ubiquitin ligase. Isoforms lacking the transactivation domain seen in striatal neurons (at protein level). Ubiquitous. Isoform 2 is expressed at higher levels in the neural tissues. In the embryo, it is expressed in brain, eye, and the maxillary and frontonasal components of the primary palate.

The protein resides in the cytoplasm. Its subcellular location is the nucleus. It is found in the cell junction. The protein localises to the tight junction. It localises to the cell membrane. Functionally, transcriptional regulator with dual roles as a coactivator and corepressor. Critical downstream regulatory target in the Hippo signaling pathway, crucial for organ size control and tumor suppression by restricting proliferation and promoting apoptosis. The Hippo signaling pathway core involves a kinase cascade featuring STK3/MST2 and STK4/MST1, along with its regulatory partner SAV1, which phosphorylates and activates LATS1/2 in complex with their regulatory protein, MOB1. This activation leads to the phosphorylation and inactivation of the YAP1 oncoprotein and WWTR1/TAZ. Phosphorylation of YAP1 by LATS1/2 prevents its nuclear translocation, thereby regulating the expression of its target genes. The transcriptional regulation of gene expression requires TEAD transcription factors and modulates cell growth, anchorage-independent growth, and induction of epithelial-mesenchymal transition (EMT). Plays a key role in tissue tension and 3D tissue shape by regulating the cortical actomyosin network, acting via ARHGAP18, a Rho GTPase activating protein that suppresses F-actin polymerization. It also suppresses ciliogenesis by acting as a transcriptional corepressor of TEAD4 target genes AURKA and PLK1. In conjunction with WWTR1, regulates TGFB1-dependent SMAD2 and SMAD3 nuclear accumulation. Synergizes with WBP2 to enhance PGR activity. This chain is Transcriptional coactivator YAP1 (Yap1), found in Mus musculus (Mouse).